The chain runs to 443 residues: ATP-dependent protease ATPase subunit HslU (443 aa).

ATP-binding positions include I18, 60-65 (GVGKTE), D256, E321, and R393.

It belongs to the ClpX chaperone family. HslU subfamily. As to quaternary structure, a double ring-shaped homohexamer of HslV is capped on each side by a ring-shaped HslU homohexamer. The assembly of the HslU/HslV complex is dependent on binding of ATP.

Its subcellular location is the cytoplasm. ATPase subunit of a proteasome-like degradation complex; this subunit has chaperone activity. The binding of ATP and its subsequent hydrolysis by HslU are essential for unfolding of protein substrates subsequently hydrolyzed by HslV. HslU recognizes the N-terminal part of its protein substrates and unfolds these before they are guided to HslV for hydrolysis. The sequence is that of ATP-dependent protease ATPase subunit HslU from Escherichia fergusonii (strain ATCC 35469 / DSM 13698 / CCUG 18766 / IAM 14443 / JCM 21226 / LMG 7866 / NBRC 102419 / NCTC 12128 / CDC 0568-73).